A 104-amino-acid chain; its full sequence is L-rhamnose mutarotase (104 aa).

Residue Tyr18 coordinates substrate. The Proton donor role is filled by His22. Residues Tyr41 and 76–77 (WW) contribute to the substrate site.

This sequence belongs to the rhamnose mutarotase family. As to quaternary structure, homodimer.

The protein localises to the cytoplasm. It carries out the reaction alpha-L-rhamnose = beta-L-rhamnose. The protein operates within carbohydrate metabolism; L-rhamnose metabolism. Involved in the anomeric conversion of L-rhamnose. This Salmonella dublin (strain CT_02021853) protein is L-rhamnose mutarotase.